Reading from the N-terminus, the 103-residue chain is Cell division protein FtsB (103 aa).

At 1-3 (MGK) the chain is on the cytoplasmic side. The helical transmembrane segment at 4–21 (LTLLLLAILVWLQYSLWF) threads the bilayer. The Periplasmic segment spans residues 22–103 (GKNGIHDYTR…RAQSAGQNNR (82 aa)). Residues 31–71 (RVNDDVAAQQATNAKLKARNDQLFAEIDDLNGGQEALEERA) adopt a coiled-coil conformation.

It belongs to the FtsB family. In terms of assembly, part of a complex composed of FtsB, FtsL and FtsQ.

It localises to the cell inner membrane. Functionally, essential cell division protein. May link together the upstream cell division proteins, which are predominantly cytoplasmic, with the downstream cell division proteins, which are predominantly periplasmic. This is Cell division protein FtsB from Shigella boydii serotype 18 (strain CDC 3083-94 / BS512).